The following is a 354-amino-acid chain: Stearoyl-CoA desaturase (354 aa).

A disordered region spans residues 1 to 28 (MPGHLLQEEMTSSYTTTTTTITEPPSES). Residues 1 to 67 (MPGHLLQEEM…EGPPPKLEYV (67 aa)) lie on the Cytoplasmic side of the membrane. Over residues 8-28 (EEMTSSYTTTTTTITEPPSES) the composition is skewed to low complexity. A helical membrane pass occupies residues 68–88 (WRNIILMALLHLGALYGLVLV). Asn-70 contributes to the substrate binding site. At 89 to 92 (PSSK) the chain is on the lumenal side. A helical transmembrane segment spans residues 93 to 113 (VYTLLWAFVYYVISIEGIGAG). The Cytoplasmic segment spans residues 114–212 (VHRLWSHRTY…EKLVMFQRRY (99 aa)). Fe cation is bound by residues His-115 and His-120. Positions 115 to 120 (HRLWSH) match the Histidine box-1 motif. Substrate is bound by residues Asn-143, Arg-150, and Asp-151. Fe cation is bound by residues His-152, His-155, and His-156. Residues 152–156 (HRAHH) carry the Histidine box-2 motif. Substrate contacts are provided by Arg-183 and Lys-184. At Ser-198 the chain carries Phosphoserine. The helical transmembrane segment at 213-232 (YKPAILLMCFILPTFVPWYF) threads the bilayer. Over 233–236 (WGEA) the chain is Lumenal. The chain crosses the membrane as a helical span at residues 237–258 (FVNSLCVSTFLRYTLVLNATWL). Residue Trp-257 participates in substrate binding. Residues 259–354 (VNSAAHLYGY…RTGDGSCKSG (96 aa)) are Cytoplasmic-facing. Positions 264, 293, 296, and 297 each coordinate Fe cation. Residues 293 to 297 (HNYHH) carry the Histidine box-3 motif.

It belongs to the fatty acid desaturase type 1 family. Fe(2+) is required as a cofactor.

It is found in the endoplasmic reticulum membrane. It catalyses the reaction octadecanoyl-CoA + 2 Fe(II)-[cytochrome b5] + O2 + 2 H(+) = (9Z)-octadecenoyl-CoA + 2 Fe(III)-[cytochrome b5] + 2 H2O. The catalysed reaction is hexadecanoyl-CoA + 2 Fe(II)-[cytochrome b5] + O2 + 2 H(+) = (9Z)-hexadecenoyl-CoA + 2 Fe(III)-[cytochrome b5] + 2 H2O. Its function is as follows. Stearoyl-CoA desaturase that utilizes O(2) and electrons from reduced cytochrome b5 to introduce the first double bond into saturated fatty acyl-CoA substrates. Catalyzes the insertion of a cis double bond at the delta-9 position into fatty acyl-CoA substrates including palmitoyl-CoA and stearoyl-CoA. Gives rise to a mixture of 16:1 and 18:1 unsaturated fatty acids. Plays an important role in lipid biosynthesis. Plays an important role in regulating the expression of genes that are involved in lipogenesis and in regulating mitochondrial fatty acid oxidation. Plays an important role in body energy homeostasis. Contributes to the biosynthesis of membrane phospholipids, cholesterol esters and triglycerides. This Mesocricetus auratus (Golden hamster) protein is Stearoyl-CoA desaturase (SCD).